Reading from the N-terminus, the 862-residue chain is Semaphorin-4D (862 aa).

The N-terminal stretch at M1 to A21 is a signal peptide. One can recognise a Sema domain in the interval M22–L500. At M22–R734 the chain is on the extracellular side. N-linked (GlcNAc...) asparagine glycans are attached at residues N49 and N77. Cystine bridges form between C97-C108 and C126-C135. N139 and N191 each carry an N-linked (GlcNAc...) asparagine glycan. Intrachain disulfides connect C257–C370 and C281–C326. Residues N329, N379, and N419 are each glycosylated (N-linked (GlcNAc...) asparagine). In terms of domain architecture, PSI spans F502–S551. Intrachain disulfides connect C503/C520, C509/C553, C512/C529, and C576/C624. Residues P554 to F636 enclose the Ig-like C2-type domain. N-linked (GlcNAc...) asparagine glycans are attached at residues N613 and N632. The chain crosses the membrane as a helical span at residues L735–C755. The Cytoplasmic portion of the chain corresponds to Y756–D862. Residues V794 to D837 form a disordered region. The span at P827 to D837 shows a compositional bias: basic and acidic residues. S833 is subject to Phosphoserine.

It belongs to the semaphorin family. In terms of assembly, homodimer. Interacts with PLXNB2. Interacts with PLXNB1. As to expression, strongly expressed in skeletal muscle, peripheral blood lymphocytes, spleen, and thymus and also expressed at lower levels in testes, brain, kidney, small intestine, prostate, heart, placenta, lung and pancreas, but not in colon and liver.

The protein resides in the cell membrane. In terms of biological role, cell surface receptor for PLXNB1 and PLXNB2 that plays an important role in cell-cell signaling. Regulates GABAergic synapse development. Promotes the development of inhibitory synapses in a PLXNB1-dependent manner. Modulates the complexity and arborization of developing neurites in hippocampal neurons by activating PLXNB1 and interaction with PLXNB1 mediates activation of RHOA. Promotes the migration of cerebellar granule cells. Plays a role in the immune system; induces B-cells to aggregate and improves their viability (in vitro). Induces endothelial cell migration through the activation of PTK2B/PYK2, SRC, and the phosphatidylinositol 3-kinase-AKT pathway. In Homo sapiens (Human), this protein is Semaphorin-4D (SEMA4D).